The sequence spans 117 residues: Hemerythrin subunit beta (117 aa).

Positions 24, 53, 57, 72, 76, 105, and 110 each coordinate Fe cation.

It belongs to the hemerythrin family. As to quaternary structure, octamer composed of two types of chains: alpha and beta.

Its function is as follows. Hemerythrin is a respiratory protein in blood cells of certain marine worms. The oxygen-binding site in each chain contains two iron atoms. This is Hemerythrin subunit beta from Lingula reevii (Inarticulated brachiopod).